A 1409-amino-acid chain; its full sequence is DNA-directed RNA polymerase subunit beta' (1409 aa).

The Zn(2+) site is built by Cys70, Cys72, Cys85, and Cys88. Asp458, Asp460, and Asp462 together coordinate Mg(2+). 4 residues coordinate Zn(2+): Cys813, Cys887, Cys894, and Cys897.

It belongs to the RNA polymerase beta' chain family. In terms of assembly, the RNAP catalytic core consists of 2 alpha, 1 beta, 1 beta' and 1 omega subunit. When a sigma factor is associated with the core the holoenzyme is formed, which can initiate transcription. Mg(2+) is required as a cofactor. It depends on Zn(2+) as a cofactor.

The catalysed reaction is RNA(n) + a ribonucleoside 5'-triphosphate = RNA(n+1) + diphosphate. In terms of biological role, DNA-dependent RNA polymerase catalyzes the transcription of DNA into RNA using the four ribonucleoside triphosphates as substrates. This chain is DNA-directed RNA polymerase subunit beta', found in Acidovorax ebreus (strain TPSY) (Diaphorobacter sp. (strain TPSY)).